The following is a 687-amino-acid chain: Glycine--tRNA ligase beta subunit (687 aa).

The protein belongs to the class-II aminoacyl-tRNA synthetase family. As to quaternary structure, tetramer of two alpha and two beta subunits.

The protein resides in the cytoplasm. It catalyses the reaction tRNA(Gly) + glycine + ATP = glycyl-tRNA(Gly) + AMP + diphosphate. The protein is Glycine--tRNA ligase beta subunit of Neisseria meningitidis serogroup C / serotype 2a (strain ATCC 700532 / DSM 15464 / FAM18).